Consider the following 264-residue polypeptide: NAD-capped RNA hydrolase NudC (264 aa).

Arginine 70 serves as a coordination point for substrate. Zn(2+) contacts are provided by cysteine 99 and cysteine 102. Glutamate 112 contributes to the substrate binding site. 2 residues coordinate Zn(2+): cysteine 117 and cysteine 122. Tyrosine 127 contacts substrate. Residues 128–257 form the Nudix hydrolase domain; that stretch reads PVICPSIIVA…TIALKLINAT (130 aa). Residues alanine 166, glutamate 182, and glutamate 186 each contribute to the a divalent metal cation site. The Nudix box signature appears at 167 to 188; it reads GFVEIGESFEQTVEREVFEETG. 200 to 207 is a binding site for substrate; that stretch reads QPWAFPNS. Glutamate 227 provides a ligand contact to a divalent metal cation. Alanine 250 serves as a coordination point for substrate.

This sequence belongs to the Nudix hydrolase family. NudC subfamily. Homodimer. Mg(2+) serves as cofactor. The cofactor is Mn(2+). Requires Zn(2+) as cofactor.

It catalyses the reaction a 5'-end NAD(+)-phospho-ribonucleoside in mRNA + H2O = a 5'-end phospho-adenosine-phospho-ribonucleoside in mRNA + beta-nicotinamide D-ribonucleotide + 2 H(+). The catalysed reaction is NAD(+) + H2O = beta-nicotinamide D-ribonucleotide + AMP + 2 H(+). It carries out the reaction NADH + H2O = reduced beta-nicotinamide D-ribonucleotide + AMP + 2 H(+). Functionally, mRNA decapping enzyme that specifically removes the nicotinamide adenine dinucleotide (NAD) cap from a subset of mRNAs by hydrolyzing the diphosphate linkage to produce nicotinamide mononucleotide (NMN) and 5' monophosphate mRNA. The NAD-cap is present at the 5'-end of some mRNAs and stabilizes RNA against 5'-processing. Has preference for mRNAs with a 5'-end purine. Catalyzes the hydrolysis of a broad range of dinucleotide pyrophosphates. This chain is NAD-capped RNA hydrolase NudC, found in Actinobacillus succinogenes (strain ATCC 55618 / DSM 22257 / CCUG 43843 / 130Z).